The sequence spans 167 residues: Lipoprotein signal peptidase (167 aa).

Helical transmembrane passes span 10–30 (LIWL…KAWV), 68–88 (WQMW…TFWL), and 98–118 (SALP…DRFL). Residues Asp124 and Asp142 contribute to the active site. A helical transmembrane segment spans residues 138-158 (FNLADSAIVAGAIGIGLLSLF).

It belongs to the peptidase A8 family.

Its subcellular location is the cell inner membrane. It catalyses the reaction Release of signal peptides from bacterial membrane prolipoproteins. Hydrolyzes -Xaa-Yaa-Zaa-|-(S,diacylglyceryl)Cys-, in which Xaa is hydrophobic (preferably Leu), and Yaa (Ala or Ser) and Zaa (Gly or Ala) have small, neutral side chains.. It participates in protein modification; lipoprotein biosynthesis (signal peptide cleavage). Its function is as follows. This protein specifically catalyzes the removal of signal peptides from prolipoproteins. This Xylella fastidiosa (strain M23) protein is Lipoprotein signal peptidase.